A 308-amino-acid chain; its full sequence is GMP synthase [glutamine-hydrolyzing] subunit B (308 aa).

Residues 2 to 183 (LNPSDFIEEA…LGLPREMIQR (182 aa)) form the GMPS ATP-PPase domain. 29-35 (SGGVDSS) provides a ligand contact to ATP.

As to quaternary structure, heterodimer composed of a glutamine amidotransferase subunit (A) and a GMP-binding subunit (B).

It catalyses the reaction XMP + L-glutamine + ATP + H2O = GMP + L-glutamate + AMP + diphosphate + 2 H(+). It functions in the pathway purine metabolism; GMP biosynthesis; GMP from XMP (L-Gln route): step 1/1. Its function is as follows. Catalyzes the synthesis of GMP from XMP. This is GMP synthase [glutamine-hydrolyzing] subunit B (guaAB) from Methanothermobacter thermautotrophicus (strain ATCC 29096 / DSM 1053 / JCM 10044 / NBRC 100330 / Delta H) (Methanobacterium thermoautotrophicum).